We begin with the raw amino-acid sequence, 335 residues long: uncharacterized protein (335 aa).

4 helical membrane passes run 104-124, 128-148, 280-300, and 310-330; these read FKKV…MGLL, LLQG…LSLF, LAFG…TMIG, and TINL…GIFV.

The protein resides in the cell membrane. This is an uncharacterized protein from Methanocaldococcus jannaschii (strain ATCC 43067 / DSM 2661 / JAL-1 / JCM 10045 / NBRC 100440) (Methanococcus jannaschii).